Here is a 521-residue protein sequence, read N- to C-terminus: Glycogen synthase (521 aa).

An ADP-alpha-D-glucose-binding site is contributed by Lys18.

It belongs to the glycosyltransferase 1 family. Bacterial/plant glycogen synthase subfamily.

The enzyme catalyses [(1-&gt;4)-alpha-D-glucosyl](n) + ADP-alpha-D-glucose = [(1-&gt;4)-alpha-D-glucosyl](n+1) + ADP + H(+). The protein operates within glycan biosynthesis; glycogen biosynthesis. Its function is as follows. Synthesizes alpha-1,4-glucan chains using ADP-glucose. The protein is Glycogen synthase of Bordetella petrii (strain ATCC BAA-461 / DSM 12804 / CCUG 43448).